A 127-amino-acid polypeptide reads, in one-letter code: Large ribosomal subunit protein bL12 (127 aa).

The protein belongs to the bacterial ribosomal protein bL12 family. As to quaternary structure, homodimer. Part of the ribosomal stalk of the 50S ribosomal subunit. Forms a multimeric L10(L12)X complex, where L10 forms an elongated spine to which 2 to 4 L12 dimers bind in a sequential fashion. Binds GTP-bound translation factors.

Forms part of the ribosomal stalk which helps the ribosome interact with GTP-bound translation factors. Is thus essential for accurate translation. The sequence is that of Large ribosomal subunit protein bL12 from Bordetella bronchiseptica (strain ATCC BAA-588 / NCTC 13252 / RB50) (Alcaligenes bronchisepticus).